The chain runs to 192 residues: Type-4 uracil-DNA glycosylase (192 aa).

Cysteine 18 and cysteine 21 together coordinate [4Fe-4S] cluster. Uracil contacts are provided by residues 45–47 (GEG), phenylalanine 59, and asparagine 85. Residues cysteine 89 and cysteine 105 each contribute to the [4Fe-4S] cluster site. Histidine 161 lines the uracil pocket.

This sequence belongs to the uracil-DNA glycosylase (UDG) superfamily. Type 4 (UDGa) family.

The catalysed reaction is Hydrolyzes single-stranded DNA or mismatched double-stranded DNA and polynucleotides, releasing free uracil.. In terms of biological role, removes uracil bases that are present in DNA as a result of either deamination of cytosine or misincorporation of dUMP instead of dTMP. Can remove uracil from double-stranded DNA containing either a U/G or U/A base pair as well as from single-stranded DNA. The polypeptide is Type-4 uracil-DNA glycosylase (Thermotoga maritima (strain ATCC 43589 / DSM 3109 / JCM 10099 / NBRC 100826 / MSB8)).